Here is a 20-residue protein sequence, read N- to C-terminus: Unknown protein NF042 from 2D-PAGE (20 aa).

This chain is Unknown protein NF042 from 2D-PAGE, found in Naegleria fowleri (Brain eating amoeba).